Here is a 58-residue protein sequence, read N- to C-terminus: Protein translocase subunit SecE (58 aa).

The helical transmembrane segment at 38–58 (IVMAFVGLLAYLIQLVLAFII) threads the bilayer.

Belongs to the SecE/SEC61-gamma family. Component of the Sec protein translocase complex. Heterotrimer consisting of SecY (alpha), SecG (beta) and SecE (gamma) subunits. The heterotrimers can form oligomers, although 1 heterotrimer is thought to be able to translocate proteins. Interacts with the ribosome. May interact with SecDF, and other proteins may be involved.

It localises to the cell membrane. Functionally, essential subunit of the Sec protein translocation channel SecYEG. Clamps together the 2 halves of SecY. May contact the channel plug during translocation. The sequence is that of Protein translocase subunit SecE from Acidianus ambivalens (Desulfurolobus ambivalens).